Consider the following 340-residue polypeptide: Flavonoid 7-O-methyltransferase 2 (340 aa).

Asp207 is an S-adenosyl-L-methionine binding site. His245 serves as the catalytic Proton acceptor.

It belongs to the class I-like SAM-binding methyltransferase superfamily. Cation-independent O-methyltransferase family. In terms of assembly, homodimer. Expressed in leaves.

The catalysed reaction is scutellarein 4'-methyl ether + S-adenosyl-L-methionine = ladanein + S-adenosyl-L-homocysteine. It catalyses the reaction acacetin + S-adenosyl-L-methionine = apigenin 4',7-dimethyl ether + S-adenosyl-L-homocysteine. It carries out the reaction diosmetin + S-adenosyl-L-methionine = luteolin 4',7-dimethyl ether + S-adenosyl-L-homocysteine. The enzyme catalyses chrysoeriol + S-adenosyl-L-methionine = velutin + S-adenosyl-L-homocysteine. The catalysed reaction is (2S)-naringenin + S-adenosyl-L-methionine = (2S)-sakuranetin + S-adenosyl-L-homocysteine + H(+). It catalyses the reaction apigenin + S-adenosyl-L-methionine = genkwanin + S-adenosyl-L-homocysteine + H(+). It carries out the reaction luteolin + S-adenosyl-L-methionine = luteolin 7-methyl ether + S-adenosyl-L-homocysteine + H(+). The enzyme catalyses scutellarein + S-adenosyl-L-methionine = scutellarein 7-methyl ether + S-adenosyl-L-homocysteine. It functions in the pathway flavonoid metabolism. Functionally, flavonoid 7-O-methyltransferase involved in the biosynthesis of polymethoxylated flavonoids natural products such as nevadensin and salvigenin, aroma compounds which contribute to the flavor of sweet basil, and exhibit pharmacological activities such as anti-allergic, anti-oxidant, antibacterial, anti-proliferative, and anti-inflammatory effects. Catalyzes S-adenosylmethionine-dependent regioselective 7-O-methylation of flavonoids; active on various hydroxylated flavonoid substrates, including apigenin (API) and luteolin (LUT), and, with a lower efficiency, scutellarein (SCU), naringenin (NAR), chrysoeriol (CHRYS), diosmetin (DIOS), acacetin (ACA) and scutellarein-7-methyl ether (SCU7Me). In Ocimum basilicum (Sweet basil), this protein is Flavonoid 7-O-methyltransferase 2.